The following is a 316-amino-acid chain: Olfactory receptor 10H4 (316 aa).

At 1-26 (MPSQNYSIISEFNLFGFSAFPQHLLP) the chain is on the extracellular side. Asparagine 5 carries N-linked (GlcNAc...) asparagine glycosylation. The chain crosses the membrane as a helical span at residues 27–47 (ILFLLYLLMFLFTLLGNLLIM). Topologically, residues 48 to 55 (ATIWIEHR) are cytoplasmic. Residues 56–76 (LHTPMYLFLCTLSVSEILFTV) form a helical membrane-spanning segment. Residues 77 to 100 (AITPRMLADLLSTHHSITFVACAN) are Extracellular-facing. Cysteines 98 and 190 form a disulfide. Residues 101-121 (QMFFSFMFGFTHSFLLLVMGY) traverse the membrane as a helical segment. At 122–140 (DRYVAICHPLRYNVLMSPR) the chain is on the cytoplasmic side. A helical transmembrane segment spans residues 141-161 (DCAHLVACTWAGGSVMGMMVT). Topologically, residues 162–198 (TIVFHLTFCGSNVIHHFFCHVLSLLKLACENKTSSVI) are extracellular. Residues 199 to 219 (MGVMLVCVTALIGCLFLIILS) traverse the membrane as a helical segment. The Cytoplasmic segment spans residues 220 to 239 (YVFIVAAILRIPSAEGRHKT). A helical transmembrane segment spans residues 240–260 (FSTCVSHLTVVVTHYSFASFI). The Extracellular portion of the chain corresponds to 261 to 273 (YLKPKGLHSMYSD). A helical membrane pass occupies residues 274–294 (ALMATTYTVFTPFLSPIIFSL). Residues 295-316 (RNKELKNAINKNFYRKFCPPSS) are Cytoplasmic-facing.

It belongs to the G-protein coupled receptor 1 family.

Its subcellular location is the cell membrane. Odorant receptor. The chain is Olfactory receptor 10H4 (OR10H4) from Homo sapiens (Human).